Consider the following 449-residue polypeptide: Glycerol-3-phosphate acyltransferase 3 (449 aa).

Transmembrane regions (helical) follow at residues 9 to 29 (FVLLHVWMSIVAGLIVLPAMF), 146 to 166 (ISVRLTIIWGLGVFVRYCVLL), and 170 to 190 (ITLAVIGLSWLVIGTTLVGFL). The HXXXXD motif motif lies at 238–243 (HTSPID). Residues 358-378 (MVSYILRMMTSWAIVCNVWYL) traverse the membrane as a helical segment.

The protein belongs to the 1-acyl-sn-glycerol-3-phosphate acyltransferase family.

It localises to the endoplasmic reticulum membrane. The enzyme catalyses sn-glycerol 3-phosphate + an acyl-CoA = a 1-acyl-sn-glycero-3-phosphate + CoA. It carries out the reaction a 1-acyl-sn-glycero-3-phosphate + an acyl-CoA = a 1,2-diacyl-sn-glycero-3-phosphate + CoA. The catalysed reaction is dodecanoyl-CoA + sn-glycerol 3-phosphate = 1-dodecanoyl-sn-glycerol 3-phosphate + CoA. It catalyses the reaction sn-glycerol 3-phosphate + hexadecanoyl-CoA = 1-hexadecanoyl-sn-glycero-3-phosphate + CoA. The enzyme catalyses sn-glycerol 3-phosphate + (9Z)-octadecenoyl-CoA = 1-(9Z-octadecenoyl)-sn-glycero-3-phosphate + CoA. It carries out the reaction (9Z,12Z)-octadecadienoyl-CoA + sn-glycerol 3-phosphate = 1-(9Z,12Z)-octadecadienoyl-sn-glycero-3-phosphate + CoA. The catalysed reaction is 1-tetradecanoyl-sn-glycerol 3-phosphate + (9Z)-octadecenoyl-CoA = 1-tetradecanoyl-2-(9Z)-octadecenoyl-sn-glycero-3-phosphate + CoA. It catalyses the reaction 1-hexadecanoyl-sn-glycero-3-phosphate + (9Z)-octadecenoyl-CoA = 1-hexadecanoyl-2-(9Z-octadecenoyl)-sn-glycero-3-phosphate + CoA. The enzyme catalyses 1-(9Z-octadecenoyl)-sn-glycero-3-phosphate + (9Z)-octadecenoyl-CoA = 1,2-di-(9Z-octadecenoyl)-sn-glycero-3-phosphate + CoA. It carries out the reaction 1-(6Z,9Z,12Z-octadecatrienoyl)-sn-glycero-3-phosphate + (9Z)-octadecenoyl-CoA = (6Z,9Z,12Z)-octadecatrienoyl-2-(9Z)-octadecenoyl-sn-glycero-3-phosphate + CoA. The catalysed reaction is 1-(9Z,12Z,15Z)-octadecatrienoyl-sn-glycero-3-phosphate + (9Z)-octadecenoyl-CoA = 1-(9Z,12Z,15Z)-octadecatrienoyl-2-(9Z)-octadecenoyl-sn-glycero-3-phosphate + CoA. It catalyses the reaction 1-(9Z-octadecenoyl)-sn-glycero-3-phosphate + tetradecanoyl-CoA = 1-(9Z)-octadecenoyl-2-tetradecanoyl-sn-glycero-3-phosphate + CoA. The enzyme catalyses 1-(9Z-octadecenoyl)-sn-glycero-3-phosphate + hexadecanoyl-CoA = 1-(9Z)-octadecenoyl-2-hexadecanoyl-sn-glycero-3-phosphate + CoA. It carries out the reaction 1-(9Z-octadecenoyl)-sn-glycero-3-phosphate + octadecanoyl-CoA = 1-(9Z-octadecenoyl)-2-octadecanoyl-sn-glycero-3-phosphate + CoA. The catalysed reaction is 1-(9Z-octadecenoyl)-sn-glycero-3-phosphate + (9Z,12Z)-octadecadienoyl-CoA = 1-(9Z)-octadecenoyl-2-(9Z,12Z)-octadecadienoyl-sn-glycero-3-phosphate + CoA. It catalyses the reaction 1-(5Z,8Z,11Z,14Z-eicosatetraenoyl)-sn-glycero-3-phosphate + (9Z)-octadecenoyl-CoA = 1-(5Z,8Z,11Z,14Z)-eicosatetraenoyl-2-(9Z)-octadecenoyl-sn-glycero-3-phosphate + CoA. The protein operates within glycerolipid metabolism; triacylglycerol biosynthesis. It functions in the pathway phospholipid metabolism; CDP-diacylglycerol biosynthesis; CDP-diacylglycerol from sn-glycerol 3-phosphate: step 1/3. Converts glycerol-3-phosphate to 1-acyl-sn-glycerol-3-phosphate (lysophosphatidic acid or LPA) by incorporating an acyl moiety at the sn-1 position of the glycerol backbone. Also converts LPA into 1,2-diacyl-sn-glycerol-3-phosphate (phosphatidic acid or PA) by incorporating an acyl moiety at the sn-2 position of the glycerol backbone. Protects cells against lipotoxicity. This Danio rerio (Zebrafish) protein is Glycerol-3-phosphate acyltransferase 3.